Reading from the N-terminus, the 159-residue chain is Large ribosomal subunit protein uL22 (159 aa).

This sequence belongs to the universal ribosomal protein uL22 family. In terms of assembly, part of the 50S ribosomal subunit.

This protein binds specifically to 23S rRNA. It makes multiple contacts with different domains of the 23S rRNA in the assembled 50S subunit and ribosome. In terms of biological role, the globular domain of the protein is located near the polypeptide exit tunnel on the outside of the subunit, while an extended beta-hairpin is found that lines the wall of the exit tunnel in the center of the 70S ribosome. In Ignicoccus hospitalis (strain KIN4/I / DSM 18386 / JCM 14125), this protein is Large ribosomal subunit protein uL22.